A 466-amino-acid chain; its full sequence is MEYRIERDTMGEVRVPADKYWGAQTQRSLENFRIGTDRFRMPLEIIRAYGMLKKAAARANLELGELPEEIAKAIIQAAEEVVQGKWDDHFPLVVFQTGSGTQTNMNVNEVIANRASEILGKPLGSKYVHPNDHVNRGQSSNDTFPTAMYVAVALALHQRLYPAVEGLIRTFTAKAQAFDQIVKVGRTHLMDAVPITLGQEIGSWAAQLKTTLAAVKEMEKGLYNLAIGGTAVGTGLNAHPRFGELVAKYLAEETGLPFRVAENRFAALAAHDELVNVMGAIRTLAGALMKIGNDVRWLASGPYAGIGEITIPANEPGSSIMPGKVNPTQVEALTMVVVRVYGNDHTVAFAGSQGNFQLNVYKPVMAYSTLESINLLADAVASFDAHLAQGIEPNLERIEEHLQKNPMLATALNKAIGYDKAAEIVKKALKEKKTLKQAALELGYLTEEEFDRIVVPMRLAKPHEGA.

Substrate contacts are provided by residues S99–T101, H129–D132, S139–N141, and T187. H188 acts as the Proton donor/acceptor in catalysis. Residue S318 is part of the active site. Substrate is bound by residues S319 and K324 to N326.

This sequence belongs to the class-II fumarase/aspartase family. Fumarase subfamily. Homotetramer.

The protein localises to the cytoplasm. It carries out the reaction (S)-malate = fumarate + H2O. It participates in carbohydrate metabolism; tricarboxylic acid cycle; (S)-malate from fumarate: step 1/1. In terms of biological role, involved in the TCA cycle. Catalyzes the stereospecific interconversion of fumarate to L-malate. This chain is Fumarate hydratase class II, found in Thermus thermophilus (strain ATCC BAA-163 / DSM 7039 / HB27).